The chain runs to 229 residues: Cytochrome c oxidase subunit 2 (229 aa).

Residues 1-26 (MSTWANLGLQDSASPLMEQLIFFHDH) are Mitochondrial intermembrane-facing. The helical transmembrane segment at 27–48 (ALLILVMITVLVGYLMFMLFFN) threads the bilayer. Over 49-62 (SYVNRFLLHGQLIE) the chain is Mitochondrial matrix. Residues 63 to 82 (MIWTILPAIILLFIAMPSLR) form a helical membrane-spanning segment. Over 83 to 229 (LLYLLDEINE…IKWISNSVNS (147 aa)) the chain is Mitochondrial intermembrane. Positions 161, 196, 198, 200, 204, and 207 each coordinate Cu cation. Glu-198 is a Mg(2+) binding site.

It belongs to the cytochrome c oxidase subunit 2 family. In terms of assembly, component of the cytochrome c oxidase (complex IV, CIV), a multisubunit enzyme composed of a catalytic core of 3 subunits and several supernumerary subunits. The complex exists as a monomer or a dimer and forms supercomplexes (SCs) in the inner mitochondrial membrane with ubiquinol-cytochrome c oxidoreductase (cytochrome b-c1 complex, complex III, CIII). Cu cation serves as cofactor.

It localises to the mitochondrion inner membrane. It catalyses the reaction 4 Fe(II)-[cytochrome c] + O2 + 8 H(+)(in) = 4 Fe(III)-[cytochrome c] + 2 H2O + 4 H(+)(out). Component of the cytochrome c oxidase, the last enzyme in the mitochondrial electron transport chain which drives oxidative phosphorylation. The respiratory chain contains 3 multisubunit complexes succinate dehydrogenase (complex II, CII), ubiquinol-cytochrome c oxidoreductase (cytochrome b-c1 complex, complex III, CIII) and cytochrome c oxidase (complex IV, CIV), that cooperate to transfer electrons derived from NADH and succinate to molecular oxygen, creating an electrochemical gradient over the inner membrane that drives transmembrane transport and the ATP synthase. Cytochrome c oxidase is the component of the respiratory chain that catalyzes the reduction of oxygen to water. Electrons originating from reduced cytochrome c in the intermembrane space (IMS) are transferred via the dinuclear copper A center (CU(A)) of subunit 2 and heme A of subunit 1 to the active site in subunit 1, a binuclear center (BNC) formed by heme A3 and copper B (CU(B)). The BNC reduces molecular oxygen to 2 water molecules using 4 electrons from cytochrome c in the IMS and 4 protons from the mitochondrial matrix. In Drosophila ambigua (Fruit fly), this protein is Cytochrome c oxidase subunit 2 (mt:CoII).